A 160-amino-acid polypeptide reads, in one-letter code: Cytochrome b6-f complex subunit 4 (160 aa).

3 helical membrane-spanning segments follow: residues 36–56, 95–115, and 131–151; these read LLYV…GLAV, LLGI…PFIE, and AVFL…TFPI.

It belongs to the cytochrome b family. PetD subfamily. As to quaternary structure, the 4 large subunits of the cytochrome b6-f complex are cytochrome b6, subunit IV (17 kDa polypeptide, PetD), cytochrome f and the Rieske protein, while the 4 small subunits are PetG, PetL, PetM and PetN. The complex functions as a dimer.

The protein resides in the cellular thylakoid membrane. In terms of biological role, component of the cytochrome b6-f complex, which mediates electron transfer between photosystem II (PSII) and photosystem I (PSI), cyclic electron flow around PSI, and state transitions. This is Cytochrome b6-f complex subunit 4 from Crocosphaera subtropica (strain ATCC 51142 / BH68) (Cyanothece sp. (strain ATCC 51142)).